A 328-amino-acid polypeptide reads, in one-letter code: Twinfilin (328 aa).

An ADF-H 1 domain is found at 1-137 (MSASVELKPT…DYQQIMKSLS (137 aa)). A Phosphoserine modification is found at serine 143. The 132-residue stretch at 173 to 304 (GVAMSIDDKA…TEKEILHAAG (132 aa)) folds into the ADF-H 2 domain. A disordered region spans residues 302 to 328 (AAGISSPQAETSTTKTGFSRPRPPRRR). The segment covering 306 to 318 (SSPQAETSTTKTG) has biased composition (polar residues).

The protein belongs to the actin-binding proteins ADF family. Twinfilin subfamily. As to quaternary structure, interacts with G-actin; ADP-actin form.

The protein localises to the cytoplasm. The protein resides in the cytoskeleton. Actin-binding protein involved in motile and morphological processes. Inhibits actin polymerization, likely by sequestering G-actin. Prevents actin filament assembly by forming a 1:1 complex with actin monomers, and inhibits the nucleotide exchange reaction of actin monomers. The chain is Twinfilin (twf1) from Schizosaccharomyces pombe (strain 972 / ATCC 24843) (Fission yeast).